A 223-amino-acid polypeptide reads, in one-letter code: Lipoprotein-releasing system ATP-binding protein LolD (223 aa).

Residues 1–223 form the ABC transporter domain; the sequence is MAKVFRSGST…DEVEPQSLPA (223 aa). 32–39 is an ATP binding site; that stretch reads GDSGSGKS.

Belongs to the ABC transporter superfamily. Lipoprotein translocase (TC 3.A.1.125) family. As to quaternary structure, the complex is composed of two ATP-binding proteins (LolD) and two transmembrane proteins (LolC and LolE).

Its subcellular location is the cell inner membrane. In terms of biological role, part of the ABC transporter complex LolCDE involved in the translocation of mature outer membrane-directed lipoproteins, from the inner membrane to the periplasmic chaperone, LolA. Responsible for the formation of the LolA-lipoprotein complex in an ATP-dependent manner. This Koribacter versatilis (strain Ellin345) protein is Lipoprotein-releasing system ATP-binding protein LolD.